The chain runs to 98 residues: Large ribosomal subunit protein uL23 (98 aa).

This sequence belongs to the universal ribosomal protein uL23 family. In terms of assembly, part of the 50S ribosomal subunit. Contacts protein L29, and trigger factor when it is bound to the ribosome.

Functionally, one of the early assembly proteins it binds 23S rRNA. One of the proteins that surrounds the polypeptide exit tunnel on the outside of the ribosome. Forms the main docking site for trigger factor binding to the ribosome. This chain is Large ribosomal subunit protein uL23, found in Halorhodospira halophila (strain DSM 244 / SL1) (Ectothiorhodospira halophila (strain DSM 244 / SL1)).